A 141-amino-acid chain; its full sequence is Nucleoside diphosphate kinase (141 aa).

Residues Lys-11, Phe-59, Arg-87, Thr-93, Arg-104, and Asn-114 each contribute to the ATP site. The Pros-phosphohistidine intermediate role is filled by His-117.

The protein belongs to the NDK family. In terms of assembly, homotetramer. The cofactor is Mg(2+).

It is found in the cytoplasm. The enzyme catalyses a 2'-deoxyribonucleoside 5'-diphosphate + ATP = a 2'-deoxyribonucleoside 5'-triphosphate + ADP. It catalyses the reaction a ribonucleoside 5'-diphosphate + ATP = a ribonucleoside 5'-triphosphate + ADP. Major role in the synthesis of nucleoside triphosphates other than ATP. The ATP gamma phosphate is transferred to the NDP beta phosphate via a ping-pong mechanism, using a phosphorylated active-site intermediate. The protein is Nucleoside diphosphate kinase of Albidiferax ferrireducens (strain ATCC BAA-621 / DSM 15236 / T118) (Rhodoferax ferrireducens).